The primary structure comprises 392 residues: Phosphoglycerate kinase (392 aa).

Substrate is bound by residues 21-23 (DMN), Arg-36, 59-62 (HLGR), Arg-114, and Arg-147. ATP is bound by residues Lys-198, Glu-320, and 346 to 349 (GGDT).

It belongs to the phosphoglycerate kinase family. In terms of assembly, monomer.

Its subcellular location is the cytoplasm. It carries out the reaction (2R)-3-phosphoglycerate + ATP = (2R)-3-phospho-glyceroyl phosphate + ADP. It functions in the pathway carbohydrate degradation; glycolysis; pyruvate from D-glyceraldehyde 3-phosphate: step 2/5. In Neisseria meningitidis serogroup C (strain 053442), this protein is Phosphoglycerate kinase.